The chain runs to 348 residues: Dihydroorotase (348 aa).

The Zn(2+) site is built by His-17 and His-19. Residues 19–21 (HLR) and Asn-45 contribute to the substrate site. Zn(2+) contacts are provided by Lys-103, His-140, and His-178. Lys-103 carries the N6-carboxylysine modification. Residue His-140 participates in substrate binding. Position 223 (Leu-223) interacts with substrate. Asp-251 is a Zn(2+) binding site. Asp-251 is an active-site residue. Substrate-binding residues include His-255 and Ala-267.

Belongs to the metallo-dependent hydrolases superfamily. DHOase family. Class II DHOase subfamily. In terms of assembly, homodimer. It depends on Zn(2+) as a cofactor.

It catalyses the reaction (S)-dihydroorotate + H2O = N-carbamoyl-L-aspartate + H(+). It participates in pyrimidine metabolism; UMP biosynthesis via de novo pathway; (S)-dihydroorotate from bicarbonate: step 3/3. Its function is as follows. Catalyzes the reversible cyclization of carbamoyl aspartate to dihydroorotate. In Shigella boydii serotype 18 (strain CDC 3083-94 / BS512), this protein is Dihydroorotase.